A 412-amino-acid chain; its full sequence is MRLSTAAALLTGFILAFSPAYDGCGPGRGYGKRRTPRKLTPLAYKQFSPNVAEKTLGASGRYEGKVTPSSERFKELTPNYNPDIIFKDEENTGADRMMTQRCKDKLNSLAISVMNLWPGVRLRVTEGWDEDGLHSEESLHYEGRAVDITTSDRDRNKYRMLARLAVEAGFDWVYYESKGHVHCSVKSEHSVAAKTGGCFPGRALVTMKDGSHRQIRDLQAGDLVLASEGSDGTGDLIYSEVLTFLDRRPITQKHFYVIRTEDGASVSLTAAHLLFMRVGNCSNRGEPKPGAVRTIFASDAQVGQCLLLGKLRKRFSQITHVGVREDQGLYPPLTAHGTVVVNDVLTSCYAAVNRQRLAHWAFAPLRLLYSWTGPDQVLKNGLHWYSQVLIGLGKLLLDSELFHPLALEATER.

Positions 1–23 (MRLSTAAALLTGFILAFSPAYDG) are cleaved as a signal peptide. The N-palmitoyl cysteine moiety is linked to residue cysteine 24. Residues glutamate 89, glutamate 90, aspartate 95, threonine 125, glutamate 126, aspartate 129, and aspartate 131 each contribute to the Ca(2+) site. The Zn(2+) site is built by histidine 140, aspartate 147, and histidine 182. The Cholesterol glycine ester moiety is linked to residue glycine 197.

This sequence belongs to the hedgehog family. In terms of assembly, multimer. Interacts with BOC and CDON. Interacts with PTCH1. Interacts with glypican GPC3. Cholesterylation is required for N-product targeting to lipid rafts and multimerization. Post-translationally, the C-terminal domain displays an autoproteolysis activity and a cholesterol transferase activity. Both activities result in the cleavage of the full-length protein and covalent attachment of a cholesterol moiety to the C-terminal of the newly generated N-product. The N-product is the active species in both local and long-range signaling, whereas the C-product is degraded in the endoplasmic reticulum. In terms of processing, N-palmitoylation by HHAT of N-product is required for indian hedgehog protein N-product multimerization and full activity. As to expression, expressed exclusively in the notochord.

It is found in the cell membrane. The protein localises to the endoplasmic reticulum membrane. The protein resides in the golgi apparatus membrane. Its subcellular location is the secreted. The catalysed reaction is glycyl-L-cysteinyl-[protein] + cholesterol + H(+) = [protein]-C-terminal glycyl cholesterol ester + N-terminal L-cysteinyl-[protein]. In terms of biological role, signal involved in the early induction and patterning of anterodorsal ectoderm, nervous system and somites. It is involved in the regulation of endochondral skeleton formation, and the development of retinal pigment epithelium (RPE), photoreceptors and periocular tissues. Its function is as follows. The C-terminal part of the indian hedgehog protein precursor displays an autoproteolysis and a cholesterol transferase activity. Both activities result in the cleavage of the full-length protein into two parts followed by the covalent attachment of a cholesterol moiety to the C-terminal of the newly generated N-product. Both activities occur in the endoplasmic reticulum. Functionally, the dually lipidated indian hedgehog protein N-product is a morphogen which is essential for a variety of patterning events during development. Binds to the patched (PTCH1) receptor, which functions in association with smoothened (SMO), to activate the transcription of target genes. In the notochord, induces somite patterning and muscle pioneer differentiation. In Danio rerio (Zebrafish), this protein is Indian hedgehog B protein (ihhb).